The sequence spans 469 residues: Aspartyl/glutamyl-tRNA(Asn/Gln) amidotransferase subunit B (469 aa).

Belongs to the GatB/GatE family. GatB subfamily. In terms of assembly, heterotrimer of A, B and C subunits.

It catalyses the reaction L-glutamyl-tRNA(Gln) + L-glutamine + ATP + H2O = L-glutaminyl-tRNA(Gln) + L-glutamate + ADP + phosphate + H(+). The enzyme catalyses L-aspartyl-tRNA(Asn) + L-glutamine + ATP + H2O = L-asparaginyl-tRNA(Asn) + L-glutamate + ADP + phosphate + 2 H(+). In terms of biological role, allows the formation of correctly charged Asn-tRNA(Asn) or Gln-tRNA(Gln) through the transamidation of misacylated Asp-tRNA(Asn) or Glu-tRNA(Gln) in organisms which lack either or both of asparaginyl-tRNA or glutaminyl-tRNA synthetases. The reaction takes place in the presence of glutamine and ATP through an activated phospho-Asp-tRNA(Asn) or phospho-Glu-tRNA(Gln). This is Aspartyl/glutamyl-tRNA(Asn/Gln) amidotransferase subunit B from Methanococcus aeolicus (strain ATCC BAA-1280 / DSM 17508 / OCM 812 / Nankai-3).